A 1394-amino-acid polypeptide reads, in one-letter code: Cyclic nucleotide-gated channel beta-1 (1394 aa).

Disordered stretches follow at residues 1–95 (MLGW…AHSS), 112–253 (VPQP…QDSA), and 271–675 (VIRG…SQNS). Residues 1 to 762 (MLGWVQRVLP…WKKYQFPQSI (762 aa)) are Cytoplasmic-facing. Composition is skewed to polar residues over residues 68–86 (PQGTQETALTPPTSLQAQV) and 116–125 (AHSSRPSQNI). 2 stretches are compositionally biased toward basic and acidic residues: residues 300–312 (EESHLILEEVDPH) and 336–355 (DEEKGKVVEQTPRELPRIQE). Residues 356–387 (EKEDEEEEKEDGEEEEEEGREKEEEEGEEKEE) show a composition bias toward acidic residues. Positions 388 to 408 (EEGREKEEEEGEKKEEEGREK) are enriched in basic and acidic residues. Positions 409–418 (EEEEGGEKED) are enriched in acidic residues. Over residues 419–433 (EEGREKEEEEGRGKE) the composition is skewed to basic and acidic residues. Composition is skewed to acidic residues over residues 452–464 (EGREEEEDEEEEQ) and 481–490 (DRSEESETQD). Composition is skewed to low complexity over residues 493-508 (EVGGAQAQGEVGGAQA) and 529-554 (EVGGAQAQGEVGGAQEQDGVGGAQDQ). The span at 654–675 (DPTSPQGTDDQDRATSTASQNS) shows a compositional bias: polar residues. The calmodulin-binding CaM1 stretch occupies residues 671 to 681 (ASQNSAIINDR). Positions 682-692 (LQELVKLFKER) match the IQ-like motif. The disordered stretch occupies residues 699–732 (KLIDPDVTSDEESPKPSPAKKAPEPAPEVKPAEA). The helical transmembrane segment at 763-793 (DPLTNLMYILWLFFVVLAWNWNCWLIPVRWA) threads the bilayer. Topologically, residues 794 to 798 (FPYQT) are extracellular. A helical transmembrane segment spans residues 799–825 (PDNIHLWLLMDYLCDLIYLLDITVFQM). The Cytoplasmic segment spans residues 826 to 837 (RLQFVRGGDIIT). A helical membrane pass occupies residues 838-861 (DKKEMRNNYVKSQRFKMDMLCLLP). The Extracellular segment spans residues 862–872 (LDLLYLKFGVN). Residues 873-887 (PLLRLPRCLKYMAFF) form a helical membrane-spanning segment. The Cytoplasmic portion of the chain corresponds to 888-900 (EFNNRLESILSKA). Residues 900-999 (AYVYRVIRTT…IGQMRDVVGA (100 aa)) form an ion conduction pathway region. Residues 901–922 (YVYRVIRTTAYLLYSLHLNSCL) form a helical membrane-spanning segment. Residues 923–931 (YYWASAYEG) are Extracellular-facing. A run of 2 helical transmembrane segments spans residues 932–974 (LGST…EIVF) and 975–1002 (QGLNYFTGVFAFSVMIGQMRDVVGAATA). The segment at 959–962 (TIGG) is selectivity filter. Residues 1003–1394 (GQTYYRSCMD…EEARKEKEEE (392 aa)) are Cytoplasmic-facing. A cyclic nucleotide-binding domain region spans residues 1082–1198 (RQMIFDMLKR…LLRKKARRML (117 aa)). 3',5'-cyclic GMP contacts are provided by Gly1143, Glu1144, Ser1146, Arg1156, and Thr1157. Residue Arg1156 coordinates 3',5'-cyclic AMP. Positions 1261 to 1267 (QQQLLEQ) are calmodulin-binding CaM2. Residues 1265-1394 (LEQAKSSEDA…EEARKEKEEE (130 aa)) form a disordered region. A compositionally biased stretch (pro residues) spans 1285-1326 (EQPPRPEPPAPEAPAPEPTAPEPLAPEAPAPEAPAPSSPPPA). 2 stretches are compositionally biased toward basic and acidic residues: residues 1329–1345 (ERPEGDKDAARPEEHPV) and 1364–1376 (VPEKQEEKEKKEE).

The protein belongs to the cyclic nucleotide-gated cation channel (TC 1.A.1.5) family. CNGB1 subfamily. The rod cyclic nucleotide-gated channel is a heterotetramer composed of CNGA1 and CNGB1 subunits with 3:1 stoichiometry. CNGA1:CNGB1 channel binds Ca(2+)-bound CALM1 via CaM1 and CaM2 regions of the CNGB1 subunit; this interaction modulates the affinity of the channel for cNMPs in response to intracellular Ca(2+) levels. The olfactory cyclic nucleotide-gated channel is a heterotetramer composed of CNGA2, CNGA4 and CNGB1 subunits with 2:1:1 stoichiometry. Retina, testis, kidney, heart and brain.

It is found in the membrane. It catalyses the reaction Ca(2+)(in) = Ca(2+)(out). The catalysed reaction is Na(+)(in) = Na(+)(out). It carries out the reaction K(+)(in) = K(+)(out). The enzyme catalyses NH4(+)(in) = NH4(+)(out). It catalyses the reaction Rb(+)(in) = Rb(+)(out). The catalysed reaction is Li(+)(in) = Li(+)(out). It carries out the reaction Cs(+)(in) = Cs(+)(out). Pore-forming subunit of the rod cyclic nucleotide-gated channel. Mediates rod photoresponses at dim light converting transient changes in intracellular cGMP levels into electrical signals. In the dark, cGMP levels are high and keep the channel open enabling a steady inward current carried by Na(+) and Ca(2+) ions that leads to membrane depolarization and neurotransmitter release from synaptic terminals. Upon photon absorption cGMP levels decline leading to channel closure and membrane hyperpolarization that ultimately slows neurotransmitter release and signals the presence of light, the end point of the phototransduction cascade. Pore-forming subunit of the olfactory cyclic nucleotide-gated channel. Operates in the cilia of olfactory sensory neurons where chemical stimulation of the odorant is converted to an electrical signal. Mediates odorant-induced cAMP-dependent Ca(2+) influx triggering neuron depolarization. The rise of intracellular Ca(2+) levels potentiates the olfactory response by activating Ca(2+)-dependent Cl(-) channels, but it also serves as a negative feedback signal to desensitize the channel for rapid adaptation to odorants. Conducts cGMP- and cAMP-gated ion currents, with permeability for monovalent and divalent cations. The selectivity for Ca(2+) over Na(+) increases with cGMP concentrations, whereas the selectivity among monovalent ions is independent of the cGMP levels. The protein is Cyclic nucleotide-gated channel beta-1 of Bos taurus (Bovine).